Reading from the N-terminus, the 289-residue chain is Agroclavine dehydrogenase (289 aa).

This sequence belongs to the fgaFS/easG family. Monomer.

The enzyme catalyses agroclavine + NADP(+) = didehydroagroclavine + NADPH + H(+). It functions in the pathway alkaloid biosynthesis; ergot alkaloid biosynthesis. Functionally, agroclavine dehydrogenase; part of the gene cluster that mediates the biosynthesis of fungal ergot alkaloid ergovaline, the predominant ergopeptine product in E.festucae var. lolii. DmaW catalyzes the first step of ergot alkaloid biosynthesis by condensing dimethylallyl diphosphate (DMAP) and tryptophan to form 4-dimethylallyl-L-tryptophan. The second step is catalyzed by the methyltransferase easF that methylates 4-dimethylallyl-L-tryptophan in the presence of S-adenosyl-L-methionine, resulting in the formation of 4-dimethylallyl-L-abrine. The catalase easC and the FAD-dependent oxidoreductase easE then transform 4-dimethylallyl-L-abrine to chanoclavine-I which is further oxidized by easD in the presence of NAD(+), resulting in the formation of chanoclavine-I aldehyde. Agroclavine dehydrogenase easG then mediates the conversion of chanoclavine-I aldehyde to agroclavine via a non-enzymatic adduct reaction: the substrate is an iminium intermediate that is formed spontaneously from chanoclavine-I aldehyde in the presence of glutathione. Further conversion of agroclavine to paspalic acid is a two-step process involving oxidation of agroclavine to elymoclavine and of elymoclavine to paspalic acid, the second step being performed by the elymoclavine oxidase cloA. However, cloA does not encode a functional enzyme indicating that C.fusiformis terminates its ergot alkaloid pathway at elymoclavine. The sequence is that of Agroclavine dehydrogenase from Claviceps fusiformis (Ergot fungus).